Here is a 368-residue protein sequence, read N- to C-terminus: 1-deoxy-D-xylulose 5-phosphate reductoisomerase (368 aa).

The NADPH site is built by threonine 7, glycine 8, serine 9, isoleucine 10, glycine 31, lysine 32, asparagine 33, and asparagine 113. Lysine 114 lines the 1-deoxy-D-xylulose 5-phosphate pocket. Glutamate 115 contributes to the NADPH binding site. Residue aspartate 133 coordinates Mn(2+). The 1-deoxy-D-xylulose 5-phosphate site is built by serine 134, glutamate 135, serine 158, and histidine 181. Glutamate 135 serves as a coordination point for Mn(2+). Residue glycine 187 coordinates NADPH. Serine 194, asparagine 199, lysine 200, and glutamate 203 together coordinate 1-deoxy-D-xylulose 5-phosphate. Glutamate 203 provides a ligand contact to Mn(2+).

The protein belongs to the DXR family. The cofactor is Mg(2+). Requires Mn(2+) as cofactor.

It carries out the reaction 2-C-methyl-D-erythritol 4-phosphate + NADP(+) = 1-deoxy-D-xylulose 5-phosphate + NADPH + H(+). The protein operates within isoprenoid biosynthesis; isopentenyl diphosphate biosynthesis via DXP pathway; isopentenyl diphosphate from 1-deoxy-D-xylulose 5-phosphate: step 1/6. In terms of biological role, catalyzes the NADPH-dependent rearrangement and reduction of 1-deoxy-D-xylulose-5-phosphate (DXP) to 2-C-methyl-D-erythritol 4-phosphate (MEP). The sequence is that of 1-deoxy-D-xylulose 5-phosphate reductoisomerase from Helicobacter pylori (strain ATCC 700392 / 26695) (Campylobacter pylori).